The following is a 484-amino-acid chain: ATP-dependent RNA helicase DDX25 (484 aa).

Thr49 bears the Phosphothreonine mark. The Nuclear export signal signature appears at 62-75; it reads LAANSLLNKLIRQS. Positions 98–126 match the Q motif motif; sequence KTFEELRLKEELLKGIYAMGFNRPSKIQE. Residues 101-115 carry the Nuclear localization signal motif; it reads EELRLKEELLKGIYA. Positions 131–301 constitute a Helicase ATP-binding domain; that stretch reads MMLAHPPQNL…ERIIPDPNVI (171 aa). ATP is bound at residue 144 to 151; it reads SQSGTGKT. Residues 248 to 251 carry the DEAD box motif; that stretch reads DEAD. One can recognise a Helicase C-terminal domain in the interval 312 to 479; the sequence is NIRQYYVLCE…QLDPEDMDEI (168 aa).

The protein belongs to the DEAD box helicase family. Phosphorylated on threonine residues. The phosphorylated form is found in the cytoplasm but not in the nucleus. As to expression, isoform 1 is expressed in germ cells. Isoform 2 is expressed in Leydig cells and in round spermatids of adult testis upon gonadotropin stimulation.

It is found in the cytoplasm. Its subcellular location is the nucleus. It catalyses the reaction ATP + H2O = ADP + phosphate + H(+). ATP-dependent RNA helicase. Required for mRNA export and translation regulation during spermatid development. The protein is ATP-dependent RNA helicase DDX25 (Ddx25) of Mus musculus (Mouse).